The sequence spans 657 residues: 1-deoxy-D-xylulose-5-phosphate synthase (657 aa).

Thiamine diphosphate-binding positions include histidine 73 and 113-115; that span reads SHA. Aspartate 145 contacts Mg(2+). Residues 146 to 147, asparagine 175, tyrosine 293, and glutamate 375 each bind thiamine diphosphate; that span reads GA. Asparagine 175 is a Mg(2+) binding site.

Belongs to the transketolase family. DXPS subfamily. Homodimer. It depends on Mg(2+) as a cofactor. Thiamine diphosphate serves as cofactor.

It catalyses the reaction D-glyceraldehyde 3-phosphate + pyruvate + H(+) = 1-deoxy-D-xylulose 5-phosphate + CO2. It participates in metabolic intermediate biosynthesis; 1-deoxy-D-xylulose 5-phosphate biosynthesis; 1-deoxy-D-xylulose 5-phosphate from D-glyceraldehyde 3-phosphate and pyruvate: step 1/1. Catalyzes the acyloin condensation reaction between C atoms 2 and 3 of pyruvate and glyceraldehyde 3-phosphate to yield 1-deoxy-D-xylulose-5-phosphate (DXP). The polypeptide is 1-deoxy-D-xylulose-5-phosphate synthase (Paenarthrobacter aurescens (strain TC1)).